Reading from the N-terminus, the 940-residue chain is Isoleucine--tRNA ligase (940 aa).

The 'HIGH' region motif lies at 58 to 68 (PYANGSIHIGH). Glu-564 is a binding site for L-isoleucyl-5'-AMP. The 'KMSKS' region motif lies at 605–609 (KMSKS). Position 608 (Lys-608) interacts with ATP. Cys-903, Cys-906, Cys-923, and Cys-926 together coordinate Zn(2+).

The protein belongs to the class-I aminoacyl-tRNA synthetase family. IleS type 1 subfamily. In terms of assembly, monomer. Requires Zn(2+) as cofactor.

The protein localises to the cytoplasm. The enzyme catalyses tRNA(Ile) + L-isoleucine + ATP = L-isoleucyl-tRNA(Ile) + AMP + diphosphate. Catalyzes the attachment of isoleucine to tRNA(Ile). As IleRS can inadvertently accommodate and process structurally similar amino acids such as valine, to avoid such errors it has two additional distinct tRNA(Ile)-dependent editing activities. One activity is designated as 'pretransfer' editing and involves the hydrolysis of activated Val-AMP. The other activity is designated 'posttransfer' editing and involves deacylation of mischarged Val-tRNA(Ile). This chain is Isoleucine--tRNA ligase, found in Shewanella baltica (strain OS185).